Here is a 97-residue protein sequence, read N- to C-terminus: Small ribosomal subunit protein bS6 (97 aa).

This sequence belongs to the bacterial ribosomal protein bS6 family.

Functionally, binds together with bS18 to 16S ribosomal RNA. The sequence is that of Small ribosomal subunit protein bS6 from Syntrophomonas wolfei subsp. wolfei (strain DSM 2245B / Goettingen).